A 302-amino-acid polypeptide reads, in one-letter code: Sulfate adenylyltransferase subunit 2 (302 aa).

This sequence belongs to the PAPS reductase family. CysD subfamily. In terms of assembly, heterodimer composed of CysD, the smaller subunit, and CysN.

It carries out the reaction sulfate + ATP + H(+) = adenosine 5'-phosphosulfate + diphosphate. It functions in the pathway sulfur metabolism; hydrogen sulfide biosynthesis; sulfite from sulfate: step 1/3. Its function is as follows. With CysN forms the ATP sulfurylase (ATPS) that catalyzes the adenylation of sulfate producing adenosine 5'-phosphosulfate (APS) and diphosphate, the first enzymatic step in sulfur assimilation pathway. APS synthesis involves the formation of a high-energy phosphoric-sulfuric acid anhydride bond driven by GTP hydrolysis by CysN coupled to ATP hydrolysis by CysD. The polypeptide is Sulfate adenylyltransferase subunit 2 (Escherichia coli O9:H4 (strain HS)).